Here is a 207-residue protein sequence, read N- to C-terminus: ATP-dependent Clp protease proteolytic subunit (207 aa).

Serine 111 acts as the Nucleophile in catalysis. Histidine 136 is an active-site residue.

This sequence belongs to the peptidase S14 family. As to quaternary structure, fourteen ClpP subunits assemble into 2 heptameric rings which stack back to back to give a disk-like structure with a central cavity, resembling the structure of eukaryotic proteasomes.

It localises to the cytoplasm. The enzyme catalyses Hydrolysis of proteins to small peptides in the presence of ATP and magnesium. alpha-casein is the usual test substrate. In the absence of ATP, only oligopeptides shorter than five residues are hydrolyzed (such as succinyl-Leu-Tyr-|-NHMec, and Leu-Tyr-Leu-|-Tyr-Trp, in which cleavage of the -Tyr-|-Leu- and -Tyr-|-Trp bonds also occurs).. In terms of biological role, cleaves peptides in various proteins in a process that requires ATP hydrolysis. Has a chymotrypsin-like activity. Plays a major role in the degradation of misfolded proteins. In Pectobacterium atrosepticum (strain SCRI 1043 / ATCC BAA-672) (Erwinia carotovora subsp. atroseptica), this protein is ATP-dependent Clp protease proteolytic subunit.